Consider the following 156-residue polypeptide: Ribosome maturation factor RimP (156 aa).

Belongs to the RimP family.

It is found in the cytoplasm. Its function is as follows. Required for maturation of 30S ribosomal subunits. The sequence is that of Ribosome maturation factor RimP from Lysinibacillus sphaericus (strain C3-41).